The sequence spans 395 residues: Elongation factor Tu (395 aa).

Residues 10–204 enclose the tr-type G domain; it reads KPHVNIGTIG…EVDAYIPTPE (195 aa). The tract at residues 19 to 26 is G1; sequence GHVDHGKT. Residue 19–26 coordinates GTP; the sequence is GHVDHGKT. Thr-26 contacts Mg(2+). The tract at residues 60-64 is G2; that stretch reads GITIS. A G3 region spans residues 81–84; the sequence is DCPG. Residues 81–85 and 136–139 each bind GTP; these read DCPGH and NKCD. A G4 region spans residues 136-139; it reads NKCD. Positions 174–176 are G5; sequence SAL.

Belongs to the TRAFAC class translation factor GTPase superfamily. Classic translation factor GTPase family. EF-Tu/EF-1A subfamily. Monomer.

The protein resides in the cytoplasm. The catalysed reaction is GTP + H2O = GDP + phosphate + H(+). In terms of biological role, GTP hydrolase that promotes the GTP-dependent binding of aminoacyl-tRNA to the A-site of ribosomes during protein biosynthesis. The sequence is that of Elongation factor Tu from Bacillus anthracis (strain A0248).